Here is a 490-residue protein sequence, read N- to C-terminus: Phosphoglucosamine mutase (490 aa).

Serine 139 acts as the Phosphoserine intermediate in catalysis. Mg(2+) is bound by residues serine 139, aspartate 279, aspartate 281, and aspartate 283. Serine 139 carries the phosphoserine modification.

Belongs to the phosphohexose mutase family. Mg(2+) serves as cofactor. Post-translationally, activated by phosphorylation.

It catalyses the reaction alpha-D-glucosamine 1-phosphate = D-glucosamine 6-phosphate. Its function is as follows. Catalyzes the conversion of glucosamine-6-phosphate to glucosamine-1-phosphate. In Nostoc sp. (strain PCC 7120 / SAG 25.82 / UTEX 2576), this protein is Phosphoglucosamine mutase.